The sequence spans 130 residues: Profilin-1 (130 aa).

This sequence belongs to the profilin family. Interacts with actin. Interacts with RHO1 (GTP-bound form).

The protein resides in the cytoplasm. It localises to the cytoskeleton. Its subcellular location is the cell projection. The protein localises to the phagocytic cup. It is found in the cytoplasmic vesicle. The protein resides in the phagosome. Its function is as follows. Binds to actin and affects the structure of the cytoskeleton. At high concentrations, profilin prevents the polymerization of actin, whereas it enhances it at low concentrations. By binding to PIP2, it inhibits the formation of IP3 and DG. The sequence is that of Profilin-1 from Entamoeba histolytica (strain ATCC 30459 / HM-1:IMSS / ABRM).